The primary structure comprises 262 residues: 5'-nucleotidase SurE (262 aa).

4 residues coordinate a divalent metal cation: Asp-11, Asp-12, Ser-43, and Asn-101.

It belongs to the SurE nucleotidase family. A divalent metal cation is required as a cofactor.

The protein localises to the cytoplasm. The catalysed reaction is a ribonucleoside 5'-phosphate + H2O = a ribonucleoside + phosphate. Its function is as follows. Nucleotidase that shows phosphatase activity on nucleoside 5'-monophosphates. The polypeptide is 5'-nucleotidase SurE (Prochlorococcus marinus (strain NATL2A)).